Consider the following 284-residue polypeptide: Cell division protein FtsQ (284 aa).

The Cytoplasmic portion of the chain corresponds to 1-31 (MAQLPASMRRKRAAITSIHDKPPTRKQKLAN). The chain crosses the membrane as a helical span at residues 32–52 (AGGWVLLVIAFVVLAVGIYGL). Residues 53–284 (YKVITDATVA…SIAGGTKAKP (232 aa)) are Periplasmic-facing. Residues 59-128 (ATVAKLEVVG…NGIRVRVMPR (70 aa)) form the POTRA domain.

Belongs to the FtsQ/DivIB family. FtsQ subfamily. Part of a complex composed of FtsB, FtsL and FtsQ.

It localises to the cell inner membrane. Essential cell division protein. May link together the upstream cell division proteins, which are predominantly cytoplasmic, with the downstream cell division proteins, which are predominantly periplasmic. May control correct divisome assembly. The protein is Cell division protein FtsQ of Acinetobacter oleivorans (strain JCM 16667 / KCTC 23045 / DR1).